An 823-amino-acid chain; its full sequence is MKLFGFGSRRGQTAQGSIDHVYTGSGYRIRDSELQKIHRAAVKGDAAEVERCLARRSGELDALDKQHRTALHLACASGHVQVVTLLVNRKCQIDVCDKENRTPLIQAVHCQEEACAVILLEHGANPNLKDIYGNTALHYAVYSESTSLAEKLLSHGAHIEALDKDNNTPLLFAIICKKEKMVEFLLKKKASSHAVDRLRRSALMLAVYYDSPGIVNILLKQNIDVFAQDMCGRDAEDYAISHHLTKIQQQILEHKKKILKKEKSDVGSSDESAVSIFHELRVDSLPASDDKDLNVATKQCVPEKVSEPLPGSSHEKGNRIVNGQGEGPPAKHPSLKPSTEVEDPAVKGAVQRKNVQTLRAEQALPVASEEEQQRHERSEKKQPQVKEGNNTNKSEKIQLSENICDSTSSAAAGRLTQQRKIGKTYPQQFPKKLKEEHDRCTLKQENEEKTNVNMLYKKNREELERKEKQYKKEVEAKQLEPTVQSLEMKSKTARNTPNWDFHNHEEMKGLMDENCILKADIAILRQEICTMKNDNLEKENKYLKDIKIVKETNAALEKYIKLNEEMITETAFRYQQELNDLKAENTRLNAELLKEKESKKRLEADIESYQSRLAAAISKHSESVKTERNLKLALERTQDVSVQVEMSSAISKVKDENEFLTEQLSETQIKFNALKDKFRKTRDSLRKKSLALETVQNNLSQTQQQTQEMKEMYQNAEAKVNNSTGKWNCVEERICHLQRENAWLVQQLDDVHQKEDHKEIVTNIQRGFIESGKKDFVLEEKSKKLMNECDHLKESLFQYEREKTEVVVSIKEDKYFQTSRKKI.

ANK repeat units follow at residues 66-95 (QHRT…QIDV), 99-128 (ENRT…NPNL), 132-161 (YGNT…HIEA), 165-194 (DNNT…SSHA), and 198-227 (LRRS…DVFA). Disordered regions lie at residues 301–343 (VPEK…EVED) and 356–405 (QTLR…NICD). Over residues 371-384 (EQQRHERSEKKQPQ) the composition is skewed to basic and acidic residues. 3 coiled-coil regions span residues 431 to 480 (KKLK…KQLE), 565 to 724 (EMIT…NNST), and 776 to 806 (FVLE…KTEV).

This Homo sapiens (Human) protein is Putative ankyrin repeat domain-containing protein 20A4.